A 486-amino-acid chain; its full sequence is F-box protein At1g80960 (486 aa).

The region spanning 49 to 97 (VDWISKLPDDVLLIILSRLSTEEAIRTSVVSKRWEHVWNQMSHLVFDMR) is the F-box domain.

This Arabidopsis thaliana (Mouse-ear cress) protein is F-box protein At1g80960.